A 314-amino-acid chain; its full sequence is tRNA pseudouridine synthase B (314 aa).

Asp41 acts as the Nucleophile in catalysis.

Belongs to the pseudouridine synthase TruB family. Type 1 subfamily.

It catalyses the reaction uridine(55) in tRNA = pseudouridine(55) in tRNA. Functionally, responsible for synthesis of pseudouridine from uracil-55 in the psi GC loop of transfer RNAs. The polypeptide is tRNA pseudouridine synthase B (Prochlorococcus marinus (strain NATL2A)).